The following is a 471-amino-acid chain: A-type ATP synthase subunit B (471 aa).

Belongs to the ATPase alpha/beta chains family. Has multiple subunits with at least A(3), B(3), C, D, E, F, H, I and proteolipid K(x).

It is found in the cell membrane. In terms of biological role, component of the A-type ATP synthase that produces ATP from ADP in the presence of a proton gradient across the membrane. The B chain is a regulatory subunit. This Natronomonas pharaonis (strain ATCC 35678 / DSM 2160 / CIP 103997 / JCM 8858 / NBRC 14720 / NCIMB 2260 / Gabara) (Halobacterium pharaonis) protein is A-type ATP synthase subunit B.